Reading from the N-terminus, the 197-residue chain is Auxin-responsive protein IAA19 (197 aa).

The EAR-like (transcriptional repression) signature appears at 13-17 (LRLGL). Residues 35 to 47 (MNMTSSGSNSDQC) show a composition bias toward polar residues. Residues 35 to 67 (MNMTSSGSNSDQCESGVVSSGGDAEKVNDSPAA) are disordered. Residues 96 to 184 (LGYVKVSMDG…KRLRIMKRSD (89 aa)) form the PB1 domain.

This sequence belongs to the Aux/IAA family. As to quaternary structure, homodimers and heterodimers. Interacts with the auxin response factor ARF7.

The protein resides in the nucleus. Aux/IAA proteins are short-lived transcriptional factors that function as repressors of early auxin response genes at low auxin concentrations. Repression is thought to result from the interaction with auxin response factors (ARFs), proteins that bind to the auxin-responsive promoter element (AuxRE). Formation of heterodimers with ARF proteins may alter their ability to modulate early auxin response genes expression. This chain is Auxin-responsive protein IAA19 (IAA19), found in Arabidopsis thaliana (Mouse-ear cress).